We begin with the raw amino-acid sequence, 576 residues long: Proteinaceous RNase P 3 (576 aa).

Over residues N65 to P75 the composition is skewed to basic and acidic residues. Positions N65–P88 are disordered. PPR repeat units follow at residues P88–L123, Q129–P166, N167–S201, and R204–L238. A PRORP domain is found at S335–C570. C340 and C343 together coordinate Zn(2+). Mn(2+)-binding residues include D402, D480, D481, and D499. Positions 553 and 570 each coordinate Zn(2+).

It belongs to the PPR family. P subfamily. The cofactor is Mg(2+). It depends on Mn(2+) as a cofactor.

It is found in the nucleus. The catalysed reaction is Endonucleolytic cleavage of RNA, removing 5'-extranucleotides from tRNA precursor.. Functionally, endonuclease RNase P responsible for the 5' maturation of tRNA precursors. Also involved in the maturation of mRNA and small nucleolar RNA (snoRNA). The protein is Proteinaceous RNase P 3 (PRORP3) of Arabidopsis thaliana (Mouse-ear cress).